A 368-amino-acid polypeptide reads, in one-letter code: Alanine racemase (368 aa).

Catalysis depends on Lys40, which acts as the Proton acceptor; specific for D-alanine. An N6-(pyridoxal phosphate)lysine modification is found at Lys40. Residue Arg134 coordinates substrate. Tyr263 serves as the catalytic Proton acceptor; specific for L-alanine. Met310 is a binding site for substrate.

This sequence belongs to the alanine racemase family. It depends on pyridoxal 5'-phosphate as a cofactor.

It carries out the reaction L-alanine = D-alanine. It participates in amino-acid biosynthesis; D-alanine biosynthesis; D-alanine from L-alanine: step 1/1. Functionally, catalyzes the interconversion of L-alanine and D-alanine. May also act on other amino acids. This chain is Alanine racemase (alr), found in Listeria monocytogenes serotype 4a (strain HCC23).